Reading from the N-terminus, the 372-residue chain is GDP-mannose transporter GONST3 (372 aa).

10 helical membrane-spanning segments follow: residues Ala33–Asn53, Phe60–Leu80, Leu92–Phe112, Thr125–Leu145, Trp155–Phe175, Ile177–Ile197, Trp209–Ile229, Val251–Ser271, Gly280–Trp300, and His303–Gln323. Residues Asn331–Leu372 are disordered. A compositionally biased stretch (basic and acidic residues) spans Glu346–Leu372.

The protein belongs to the nucleotide-sugar transporter family. GDP-Mannose:GMP antiporter (GMA) (TC 2.A.7.13) subfamily. In terms of tissue distribution, expressed in rosette leaves, stems, flowers and siliques.

It is found in the golgi apparatus membrane. Functionally, GDP-mannose transporter that may be involved in the import of GDP-mannose from the cytoplasm into the Golgi lumen. The polypeptide is GDP-mannose transporter GONST3 (Arabidopsis thaliana (Mouse-ear cress)).